The chain runs to 477 residues: Iroquois homeobox protein 6a (477 aa).

Residues 148-210 (GSTRRKNATR…NARRRLKKEN (63 aa)) constitute a DNA-binding region (homeobox). Disordered stretches follow at residues 209–282 (ENKM…PDIP) and 303–323 (DYLDHLGSKPQQQQPSPQSTS). Residues 219–237 (KAGDDRKEDLDSKDSKDEQ) are compositionally biased toward basic and acidic residues. Over residues 243-253 (DLDDMEDEDCD) the composition is skewed to acidic residues. The span at 254 to 264 (KLDSDCEKSGQ) shows a compositional bias: basic and acidic residues. A compositionally biased stretch (low complexity) spans 310–321 (SKPQQQQPSPQS).

Belongs to the TALE/IRO homeobox family.

The protein resides in the nucleus. Transcription factor. Binds to the iroquois binding site (IBS) motif of target genes to regulate gene expression; functions as a transcriptional activator or repressor. In concert with irx5a, plays a role in visual performance. The chain is Iroquois homeobox protein 6a from Danio rerio (Zebrafish).